Reading from the N-terminus, the 359-residue chain is MAVVAVLVRKPLEQVSGLLRRRFHRTAPAALQVTVREAINQGMDEELERDEKVFLLGEEVAQYDGAYKVSRGLWKKYGDKRIIDTPISEMGFAGIAVGAAMAGLRPICEFMTFNFSMQAIDQVINSAAKTYYMSGGLQSVPIVFRGPNGASAGVAAQHSQCFAAWYGHCPGLKVVSPWSSEDAKGLIKSAIRDNNPVVVLENELMYGVPFELPSEAQSKDFLIPIGKAKIERQGTHVTIVAHSRPVGHCLEAATVLSKEGIECEVINLRTIRPMDIETIEGSVMKTNHLVTVEGGWPQFGVGAEICARIMEGPAFNFLDAPAVRVTGADVPMPYAKILEDNSVPQVKDIIFAIKKTLNI.

The transit peptide at 1–30 directs the protein to the mitochondrion; that stretch reads MAVVAVLVRKPLEQVSGLLRRRFHRTAPAA. Residue tyrosine 67 is modified to Phosphotyrosine. Glutamate 89 provides a ligand contact to thiamine diphosphate. Residues isoleucine 142, alanine 190, isoleucine 191, aspartate 193, and asparagine 195 each coordinate K(+). Lysine 354 carries the N6-acetyllysine modification.

Heterotetramer of two PDHA1 and two PDHB subunits. The heterotetramer interacts with DLAT, and is part of the multimeric pyruvate dehydrogenase complex that contains multiple copies of pyruvate dehydrogenase (E1), dihydrolipoamide acetyltransferase (DLAT, E2) and lipoamide dehydrogenase (DLD, E3). These subunits are bound to an inner core composed of about 48 DLAT and 12 PDHX molecules. Interacts with DLAT. Thiamine diphosphate is required as a cofactor.

Its subcellular location is the mitochondrion matrix. The catalysed reaction is N(6)-[(R)-lipoyl]-L-lysyl-[protein] + pyruvate + H(+) = N(6)-[(R)-S(8)-acetyldihydrolipoyl]-L-lysyl-[protein] + CO2. Functionally, the pyruvate dehydrogenase complex catalyzes the overall conversion of pyruvate to acetyl-CoA and CO(2), and thereby links the glycolytic pathway to the tricarboxylic cycle. This is Pyruvate dehydrogenase E1 component subunit beta, mitochondrial (PDHB) from Bos taurus (Bovine).